Here is a 988-residue protein sequence, read N- to C-terminus: Chitin synthase 1 (988 aa).

Residues 29–75 (QHHWPPSSGSSLGRAPSIPLSSSNPRSPIRPSTPSRVSTDWTRPPAP) form a disordered region. A compositionally biased stretch (low complexity) spans 44-66 (PSIPLSSSNPRSPIRPSTPSRVS). The next 7 membrane-spanning stretches (helical) occupy residues 577–596 (WLNGAFFAAVYALVHFKQIW), 616–636 (FISLLFTFFSLANFYLTFYFV), 656–676 (IFVILRYVCVLLICLQFILSL), 732–752 (IFTNLIVSSVSTIGLFFLMSF), 764–784 (SAQYFALLPSYICTLQVYAFC), 864–884 (YVVASYMVCNAILAMAVSEAY), and 911–931 (AIGSSAFGVINIVSAIAEGRI). The disordered stretch occupies residues 950–988 (AGLGSGFSESGKTGITSGSGMSGMSLSDVTSKISEKLAG). Over residues 957 to 976 (SESGKTGITSGSGMSGMSLS) the composition is skewed to low complexity.

Belongs to the chitin synthase family. Class II subfamily.

It localises to the cell membrane. It carries out the reaction [(1-&gt;4)-N-acetyl-beta-D-glucosaminyl](n) + UDP-N-acetyl-alpha-D-glucosamine = [(1-&gt;4)-N-acetyl-beta-D-glucosaminyl](n+1) + UDP + H(+). Functionally, polymerizes chitin, a structural polymer of the cell wall and septum, by transferring the sugar moiety of UDP-GlcNAc to the non-reducing end of the growing chitin polymer. CHS1 mainly responsible for normal yeast cell reproductive growth. This Exophiala dermatitidis (Black yeast-like fungus) protein is Chitin synthase 1.